The chain runs to 271 residues: Transmembrane protein 33 homolog (271 aa).

Residues 1–32 (MVEIVEEPDDHQSSSTGAGSSGSSSAPPPPPP) form a disordered region. Residues 13–25 (SSSTGAGSSGSSS) are compositionally biased toward low complexity. A run of 3 helical transmembrane segments spans residues 56–76 (VLTV…VPAH), 125–145 (VVFL…IYAA), and 180–200 (ALGI…SLIF).

The protein belongs to the PER33/POM33 family.

The protein localises to the membrane. This chain is Transmembrane protein 33 homolog, found in Caenorhabditis elegans.